A 243-amino-acid polypeptide reads, in one-letter code: Probable ubiquitin-conjugating enzyme E2 33 (243 aa).

Residues alanine 5–glutamine 162 enclose the UBC core domain. The active-site Glycyl thioester intermediate is the cysteine 87. Residues glutamate 168 to valine 197 are disordered. The span at proline 184–valine 197 shows a compositional bias: basic and acidic residues. A helical transmembrane segment spans residues leucine 220–leucine 240.

It belongs to the ubiquitin-conjugating enzyme family.

It localises to the membrane. The catalysed reaction is S-ubiquitinyl-[E1 ubiquitin-activating enzyme]-L-cysteine + [E2 ubiquitin-conjugating enzyme]-L-cysteine = [E1 ubiquitin-activating enzyme]-L-cysteine + S-ubiquitinyl-[E2 ubiquitin-conjugating enzyme]-L-cysteine.. It functions in the pathway protein modification; protein ubiquitination. Functionally, accepts the ubiquitin from the E1 complex and catalyzes its covalent attachment to other proteins. The sequence is that of Probable ubiquitin-conjugating enzyme E2 33 (UBC33) from Arabidopsis thaliana (Mouse-ear cress).